Consider the following 373-residue polypeptide: NADPH-dependent 3-keto-steroid reductase HSD3B3 (373 aa).

NADP(+)-binding positions include 10-15 (GAGGFL), Tyr155, and Lys159. Catalysis depends on Lys159, which acts as the Proton donor. The helical transmembrane segment at 288–308 (VALLYWFGFLLETVSFLLRPV) threads the bilayer.

The protein belongs to the 3-beta-HSD family. As to expression, high levels in adrenal gland, kidney and male liver (at protein level). Low levels in female liver (at protein level). Expressed in ovaries (at protein level).

The protein resides in the endoplasmic reticulum membrane. The protein localises to the mitochondrion membrane. It catalyses the reaction a 3beta-hydroxysteroid + NADP(+) = a 3-oxosteroid + NADPH + H(+). The catalysed reaction is 5alpha-androstane-3beta,17beta-diol + NADP(+) = 17beta-hydroxy-5alpha-androstan-3-one + NADPH + H(+). The protein operates within steroid metabolism. Responsible for the reduction of the oxo group on the C-3 of 5alpha-androstane steroids. Catalyzes the conversion of dihydrotestosterone to its inactive form 5alpha-androstanediol, that does not bind androgen receptor/AR. Does not function as an isomerase. The polypeptide is NADPH-dependent 3-keto-steroid reductase HSD3B3 (HSD3B3) (Mesocricetus auratus (Golden hamster)).